The chain runs to 160 residues: Large ribosomal subunit protein uL16 (160 aa).

The disordered stretch occupies residues 138–160 (KNLEAPSQEKTKNSKKSQEEVKQ).

It belongs to the universal ribosomal protein uL16 family. As to quaternary structure, part of the 50S ribosomal subunit.

In terms of biological role, binds 23S rRNA and is also seen to make contacts with the A and possibly P site tRNAs. The chain is Large ribosomal subunit protein uL16 from Prochlorococcus marinus (strain MIT 9215).